We begin with the raw amino-acid sequence, 282 residues long: Probable endonuclease 4 (282 aa).

His-70, His-110, Glu-146, Asp-180, His-183, His-217, Asp-230, His-232, and Glu-262 together coordinate Zn(2+).

The protein belongs to the AP endonuclease 2 family. Requires Zn(2+) as cofactor.

The catalysed reaction is Endonucleolytic cleavage to 5'-phosphooligonucleotide end-products.. Its function is as follows. Endonuclease IV plays a role in DNA repair. It cleaves phosphodiester bonds at apurinic or apyrimidinic (AP) sites, generating a 3'-hydroxyl group and a 5'-terminal sugar phosphate. This chain is Probable endonuclease 4, found in Wolinella succinogenes (strain ATCC 29543 / DSM 1740 / CCUG 13145 / JCM 31913 / LMG 7466 / NCTC 11488 / FDC 602W) (Vibrio succinogenes).